Consider the following 320-residue polypeptide: o-succinylbenzoate synthase (320 aa).

K133 acts as the Proton donor in catalysis. Residues D161, E190, and D213 each coordinate Mg(2+). The Proton acceptor role is filled by K235.

This sequence belongs to the mandelate racemase/muconate lactonizing enzyme family. MenC type 1 subfamily. The cofactor is a divalent metal cation.

The enzyme catalyses (1R,6R)-6-hydroxy-2-succinyl-cyclohexa-2,4-diene-1-carboxylate = 2-succinylbenzoate + H2O. The protein operates within quinol/quinone metabolism; 1,4-dihydroxy-2-naphthoate biosynthesis; 1,4-dihydroxy-2-naphthoate from chorismate: step 4/7. It participates in quinol/quinone metabolism; menaquinone biosynthesis. Converts 2-succinyl-6-hydroxy-2,4-cyclohexadiene-1-carboxylate (SHCHC) to 2-succinylbenzoate (OSB). The polypeptide is o-succinylbenzoate synthase (Shigella boydii serotype 4 (strain Sb227)).